The following is a 525-amino-acid chain: uncharacterized protein (525 aa).

The zn(2)-C6 fungal-type DNA-binding region spans 21–48 (CLICRSMRKKCDEVHPQCGRCLKAGKQC).

It localises to the cytoplasm. The protein resides in the nucleus. This is an uncharacterized protein from Schizosaccharomyces pombe (strain 972 / ATCC 24843) (Fission yeast).